The sequence spans 244 residues: MRNDQREVNQLRNINITTNYISHPEGSVLIEMGNTKVICNASIEDRVPPFMRGQGKGWITAEYAMLPRATAQRNIRESSKGKVSGRTMEIQRLIGRALRSVVDLDQIGERTVWIDCDVIQADGGTRTASITGAFVAMSLAFAKLVEAKTLKKTPIQDYLAAISVGVLTNGTEILDLNYEEDSEAAVDMNIVMTGEGEFVEIQGTGEEATFTPNQLQNMLKLGEEGIQQLVKIQKELLADKLLID.

Phosphate is bound by residues arginine 86 and 124 to 126 (GTR).

This sequence belongs to the RNase PH family. As to quaternary structure, homohexameric ring arranged as a trimer of dimers.

The enzyme catalyses tRNA(n+1) + phosphate = tRNA(n) + a ribonucleoside 5'-diphosphate. Phosphorolytic 3'-5' exoribonuclease that plays an important role in tRNA 3'-end maturation. Removes nucleotide residues following the 3'-CCA terminus of tRNAs; can also add nucleotides to the ends of RNA molecules by using nucleoside diphosphates as substrates, but this may not be physiologically important. Probably plays a role in initiation of 16S rRNA degradation (leading to ribosome degradation) during starvation. This is Ribonuclease PH from Oceanobacillus iheyensis (strain DSM 14371 / CIP 107618 / JCM 11309 / KCTC 3954 / HTE831).